A 529-amino-acid polypeptide reads, in one-letter code: Pre-rRNA-processing protein pro-1 (529 aa).

2 WD repeats span residues 136–175 (AHYQ…SADR) and 287–326 (GHSD…CLKV). Positions 416–518 (ARNEAAKAEK…LKEINKQMYE (103 aa)) form a coiled coil. Residues 436–470 (TLGDDEDDAPEVGNQRRKSGKKNKKNRKNQKKNDF) form a disordered region. Positions 450 to 465 (QRRKSGKKNKKNRKNQ) are enriched in basic residues.

The protein belongs to the WD repeat IPI3/WDR18 family. As to quaternary structure, component of the PELP1 complex, composed of at least PELP1, TEX10 and WDR18. The complex interacts with pre-60S ribosome particles.

It is found in the nucleus. It localises to the nucleolus. Its subcellular location is the nucleoplasm. In terms of biological role, component of the PELP1 complex involved in the nucleolar steps of 28S rRNA maturation and the subsequent nucleoplasmic transit of the pre-60S ribosomal subunit. Required for processing ITS2 sequences from rRNA intermediates during 26S rRNA maturation. Required in the soma to promote normal proliferation and prevent germline tumor formation. This Caenorhabditis elegans protein is Pre-rRNA-processing protein pro-1.